Here is a 149-residue protein sequence, read N- to C-terminus: Phosphoribosyl-AMP cyclohydrolase (149 aa).

Asp92 is a binding site for Mg(2+). Residue Cys93 coordinates Zn(2+). Mg(2+)-binding residues include Asp94 and Asp96. Zn(2+) contacts are provided by Cys111 and Cys118.

This sequence belongs to the PRA-CH family. Homodimer. Mg(2+) is required as a cofactor. It depends on Zn(2+) as a cofactor.

It is found in the cytoplasm. The enzyme catalyses 1-(5-phospho-beta-D-ribosyl)-5'-AMP + H2O = 1-(5-phospho-beta-D-ribosyl)-5-[(5-phospho-beta-D-ribosylamino)methylideneamino]imidazole-4-carboxamide. The protein operates within amino-acid biosynthesis; L-histidine biosynthesis; L-histidine from 5-phospho-alpha-D-ribose 1-diphosphate: step 3/9. Functionally, catalyzes the hydrolysis of the adenine ring of phosphoribosyl-AMP. The polypeptide is Phosphoribosyl-AMP cyclohydrolase (Rhizobium rhizogenes (strain K84 / ATCC BAA-868) (Agrobacterium radiobacter)).